The following is a 248-amino-acid chain: Granzyme E (248 aa).

Residues 1 to 18 form the signal peptide; sequence MPPVLILLTLLLPLGAGA. The propeptide occupies 19–20; it reads EE. The region spanning 21-246 is the Peptidase S1 domain; that stretch reads IIGGHVVKPH…FLPWISRNMK (226 aa). An intrachain disulfide couples cysteine 50 to cysteine 66. Histidine 65 acts as the Charge relay system in catalysis. N-linked (GlcNAc...) asparagine glycosylation is found at asparagine 68 and asparagine 102. Residue aspartate 109 is the Charge relay system of the active site. Disulfide bonds link cysteine 143/cysteine 210 and cysteine 175/cysteine 189. A glycan (N-linked (GlcNAc...) asparagine) is linked at asparagine 154. The active-site Charge relay system is serine 204. An N-linked (GlcNAc...) asparagine glycan is attached at asparagine 223.

Belongs to the peptidase S1 family. Granzyme subfamily.

The protein localises to the cytolytic granule. This enzyme is probably necessary for target cell lysis in cell-mediated immune responses. The sequence is that of Granzyme E (Gzme) from Mus musculus (Mouse).